A 255-amino-acid polypeptide reads, in one-letter code: Hydroxyacylglutathione hydrolase (255 aa).

Zn(2+) contacts are provided by His53, His55, Asp57, His58, His111, Asp128, and His166.

Belongs to the metallo-beta-lactamase superfamily. Glyoxalase II family. Monomer. The cofactor is Zn(2+).

It catalyses the reaction an S-(2-hydroxyacyl)glutathione + H2O = a 2-hydroxy carboxylate + glutathione + H(+). It participates in secondary metabolite metabolism; methylglyoxal degradation; (R)-lactate from methylglyoxal: step 2/2. Functionally, thiolesterase that catalyzes the hydrolysis of S-D-lactoyl-glutathione to form glutathione and D-lactic acid. The sequence is that of Hydroxyacylglutathione hydrolase from Nitrosomonas eutropha (strain DSM 101675 / C91 / Nm57).